The sequence spans 313 residues: PGR5-like protein 1B, chloroplastic (313 aa).

A chloroplast-targeting transit peptide spans 1-49; it reads MAFTLTIPRFSAISRKPITCSSSRTQCPAPFTHGRSISLRRRLTLLPLK. Position 50 is an N-acetylalanine (Ala-50). Residues 50–187 lie on the Stromal side of the membrane; sequence ASTDQSGQVG…KVYSDLAIDY (138 aa). Residues Cys-71 and Cys-172 are joined by a disulfide bond. A helical membrane pass occupies residues 188-208; that stretch reads FKMFLLNVPATVVALGLFFFL. Topologically, residues 209-225 are lumenal, thylakoid; the sequence is DDITGFEITYLLELPEP. A helical transmembrane segment spans residues 226 to 246; it reads FSFIFTWFAAVPAIVYLALSL. At 247–313 the chain is on the stromal side; sequence TKLILKDFLI…LITLPEGGKA (67 aa).

Belongs to the PGR5 family. In terms of assembly, homodimer and heterodimer with PGR5. Interacts with PGR5, FD2, psaD1, LFNR1 and LFNR2. Also interacts with petC and a Fe-containing cofactor (FCC). In terms of processing, disulfide bonds; Cys-289 and Cys-292 are probably involved in the formation of disulfide bridges with 'Cys-11' and 'Cys-105' of PGR5 while Cys-261 and Cys-264 are probably involved in the binding of a Fe-containing cofactor (FCC).

Its subcellular location is the plastid. The protein localises to the chloroplast thylakoid membrane. Its activity is regulated as follows. Inhibited by antimycin A. Ferredoxin-plastoquinone reductase involved in cyclic electron flow (CEF) around photosystem I. The homodimer is probably not involved in CEF. This chain is PGR5-like protein 1B, chloroplastic (PGRL1B), found in Arabidopsis thaliana (Mouse-ear cress).